Reading from the N-terminus, the 1143-residue chain is DNA polymerase II large subunit (1143 aa).

It belongs to the archaeal DNA polymerase II family. In terms of assembly, heterodimer of a large subunit and a small subunit.

The catalysed reaction is DNA(n) + a 2'-deoxyribonucleoside 5'-triphosphate = DNA(n+1) + diphosphate. It catalyses the reaction Exonucleolytic cleavage in the 3'- to 5'-direction to yield nucleoside 5'-phosphates.. Possesses two activities: a DNA synthesis (polymerase) and an exonucleolytic activity that degrades single-stranded DNA in the 3'- to 5'-direction. Has a template-primer preference which is characteristic of a replicative DNA polymerase. This Archaeoglobus fulgidus (strain ATCC 49558 / DSM 4304 / JCM 9628 / NBRC 100126 / VC-16) protein is DNA polymerase II large subunit (polC).